The sequence spans 151 residues: Large ribosomal subunit protein uL22c (151 aa).

Belongs to the universal ribosomal protein uL22 family. In terms of assembly, part of the 50S ribosomal subunit.

It localises to the plastid. The protein resides in the chloroplast. Functionally, this protein binds specifically to 23S rRNA. Its function is as follows. The globular domain of the protein is located near the polypeptide exit tunnel on the outside of the subunit, while an extended beta-hairpin is found that lines the wall of the exit tunnel in the center of the 70S ribosome. The sequence is that of Large ribosomal subunit protein uL22c (rpl22) from Gossypium barbadense (Sea Island cotton).